Consider the following 399-residue polypeptide: Na(+)/H(+) antiporter NhaA (399 aa).

11 consecutive transmembrane segments (helical) span residues 14 to 34 (AGGI…NSPL), 59 to 79 (LIHW…GLEV), 95 to 115 (SLPT…YLLF), 124 to 144 (AGWA…MALL), 154 to 174 (VFLL…IAMF), 177 to 197 (TDLS…LVGL), 213 to 233 (LILW…GVII), 261 to 281 (FIIL…PMSF), 290 to 310 (VGIA…FSYI), 331 to 351 (VALM…LAFV), and 363 to 383 (LGIL…LAKV).

It belongs to the NhaA Na(+)/H(+) (TC 2.A.33) antiporter family.

It is found in the cell inner membrane. It carries out the reaction Na(+)(in) + 2 H(+)(out) = Na(+)(out) + 2 H(+)(in). Its function is as follows. Na(+)/H(+) antiporter that extrudes sodium in exchange for external protons. The polypeptide is Na(+)/H(+) antiporter NhaA (Shewanella sediminis (strain HAW-EB3)).